Consider the following 158-residue polypeptide: NAD(P)H-quinone oxidoreductase subunit N (158 aa).

This sequence belongs to the complex I NdhN subunit family. In terms of assembly, NDH-1 can be composed of about 15 different subunits; different subcomplexes with different compositions have been identified which probably have different functions.

Its subcellular location is the cellular thylakoid membrane. The catalysed reaction is a plastoquinone + NADH + (n+1) H(+)(in) = a plastoquinol + NAD(+) + n H(+)(out). It carries out the reaction a plastoquinone + NADPH + (n+1) H(+)(in) = a plastoquinol + NADP(+) + n H(+)(out). Functionally, NDH-1 shuttles electrons from an unknown electron donor, via FMN and iron-sulfur (Fe-S) centers, to quinones in the respiratory and/or the photosynthetic chain. The immediate electron acceptor for the enzyme in this species is believed to be plastoquinone. Couples the redox reaction to proton translocation, and thus conserves the redox energy in a proton gradient. Cyanobacterial NDH-1 also plays a role in inorganic carbon-concentration. The protein is NAD(P)H-quinone oxidoreductase subunit N of Prochlorococcus marinus (strain MIT 9215).